The primary structure comprises 243 residues: Small ribosomal subunit protein uS3 (243 aa).

A KH type-2 domain is found at 39 to 107; the sequence is IRAYLIKELK…ETHLNIVEVR (69 aa). A disordered region spans residues 214–243; it reads ASERRGLEGDAQGPASRERGDRPDRRRENA. Residues 229–243 show a composition bias toward basic and acidic residues; sequence SRERGDRPDRRRENA.

This sequence belongs to the universal ribosomal protein uS3 family. In terms of assembly, part of the 30S ribosomal subunit. Forms a tight complex with proteins S10 and S14.

Its function is as follows. Binds the lower part of the 30S subunit head. Binds mRNA in the 70S ribosome, positioning it for translation. This Agrobacterium fabrum (strain C58 / ATCC 33970) (Agrobacterium tumefaciens (strain C58)) protein is Small ribosomal subunit protein uS3.